A 612-amino-acid polypeptide reads, in one-letter code: Peroxisomal carnitine O-octanoyltransferase (612 aa).

An N-acetylmethionine modification is found at Met-1. 2 positions are modified to N6-succinyllysine: Lys-40 and Lys-57. His-327 serves as the catalytic Proton acceptor. Residues Lys-406 and 410-417 (KEKQLHPD) each bind CoA. N6-acetyllysine; alternate is present on Lys-406. Lys-406 bears the N6-succinyllysine; alternate mark. Residues Tyr-439, Thr-441, and Thr-452 each coordinate (R)-carnitine. Residues 610-612 (PHL) carry the Microbody targeting signal motif.

Belongs to the carnitine/choline acetyltransferase family. As to quaternary structure, monomer.

The protein resides in the peroxisome. The enzyme catalyses octanoyl-CoA + (R)-carnitine = O-octanoyl-(R)-carnitine + CoA. The catalysed reaction is 4,8-dimethylnonanoyl-CoA + (R)-carnitine = O-4,8-dimethylnonanoyl-(R)-carnitine + CoA. It functions in the pathway lipid metabolism; fatty acid beta-oxidation. In terms of biological role, beta-oxidation of fatty acids. The highest activity concerns the C6 to C10 chain length substrate. In Bos taurus (Bovine), this protein is Peroxisomal carnitine O-octanoyltransferase (CROT).